We begin with the raw amino-acid sequence, 127 residues long: Aspartate 1-decarboxylase (127 aa).

Ser-25 serves as the catalytic Schiff-base intermediate with substrate; via pyruvic acid. Ser-25 bears the Pyruvic acid (Ser) mark. Thr-57 serves as a coordination point for substrate. The Proton donor role is filled by Tyr-58. Residue 73 to 75 (GAA) participates in substrate binding.

The protein belongs to the PanD family. As to quaternary structure, heterooctamer of four alpha and four beta subunits. Pyruvate serves as cofactor. Is synthesized initially as an inactive proenzyme, which is activated by self-cleavage at a specific serine bond to produce a beta-subunit with a hydroxyl group at its C-terminus and an alpha-subunit with a pyruvoyl group at its N-terminus.

It localises to the cytoplasm. The enzyme catalyses L-aspartate + H(+) = beta-alanine + CO2. It functions in the pathway cofactor biosynthesis; (R)-pantothenate biosynthesis; beta-alanine from L-aspartate: step 1/1. Functionally, catalyzes the pyruvoyl-dependent decarboxylation of aspartate to produce beta-alanine. The protein is Aspartate 1-decarboxylase of Listeria innocua serovar 6a (strain ATCC BAA-680 / CLIP 11262).